The primary structure comprises 465 residues: Cystathionine beta-lyase (465 aa).

Lysine 213 bears the N6-(pyridoxal phosphate)lysine mark.

This sequence belongs to the trans-sulfuration enzymes family. It depends on pyridoxal 5'-phosphate as a cofactor.

It is found in the cytoplasm. Its subcellular location is the nucleus. It catalyses the reaction L,L-cystathionine + H2O = L-homocysteine + pyruvate + NH4(+). It carries out the reaction an S-substituted L-cysteine + H2O = a thiol + pyruvate + NH4(+). It functions in the pathway amino-acid biosynthesis; L-methionine biosynthesis via de novo pathway; L-homocysteine from L-cystathionine: step 1/1. This is Cystathionine beta-lyase (STR3) from Saccharomyces cerevisiae (strain ATCC 204508 / S288c) (Baker's yeast).